We begin with the raw amino-acid sequence, 155 residues long: RNA pyrophosphohydrolase (155 aa).

The region spanning 6 to 148 is the Nudix hydrolase domain; sequence GYRANVAIVL…KQDVYRRALT (143 aa). The Nudix box signature appears at 38 to 59; it reads GGVATGETPLQAMYRELYEEVG.

This sequence belongs to the Nudix hydrolase family. RppH subfamily. A divalent metal cation is required as a cofactor.

Accelerates the degradation of transcripts by removing pyrophosphate from the 5'-end of triphosphorylated RNA, leading to a more labile monophosphorylated state that can stimulate subsequent ribonuclease cleavage. The polypeptide is RNA pyrophosphohydrolase (Francisella philomiragia subsp. philomiragia (strain ATCC 25017 / CCUG 19701 / FSC 153 / O#319-036)).